A 264-amino-acid chain; its full sequence is MDSRPIGVFDSGVGGLTVLKRLIQVLPEEDYIYFGDTKRVPYGDRSKEEIELFAGQIINFMKEKNVKAVVIACNTTCATIDKGKYDIELFDVLKAGAESGVYCTKNKKVGVIATKRTVESRSYEINIKSINPQIEVYQKACPEFVPLIEKGLYNSHLAYKAAKDCLEEFKGKEIDTLILGCTHYPLMEPIIKAIMGDGVKVVDPAVRLSHEVKEYLERSRILNFGKKGKIEFFVSGDAENFKRAAEMVLGKKIDEVFIVDIERY.

Substrate is bound by residues 10 to 11 (DS) and 42 to 43 (YG). The active-site Proton donor/acceptor is the Cys-73. Residue 74 to 75 (NT) coordinates substrate. The Proton donor/acceptor role is filled by Cys-181. 182–183 (TH) lines the substrate pocket.

Belongs to the aspartate/glutamate racemases family.

It carries out the reaction L-glutamate = D-glutamate. It participates in cell wall biogenesis; peptidoglycan biosynthesis. Its function is as follows. Provides the (R)-glutamate required for cell wall biosynthesis. The chain is Glutamate racemase 2 from Caldanaerobacter subterraneus subsp. tengcongensis (strain DSM 15242 / JCM 11007 / NBRC 100824 / MB4) (Thermoanaerobacter tengcongensis).